A 58-amino-acid polypeptide reads, in one-letter code: COP9 signalosome complex subunit 6b (58 aa).

Belongs to the peptidase M67A family. CSN6 subfamily. As to quaternary structure, component of the CSN complex, probably composed of CSN1, CSN2, CSN3, CSN4, CSN5 (CSN5A or CSN5B), CSN6 (CSN6A or CSN6B), CSN7 and CSN8.

It is found in the cytoplasm. Its subcellular location is the nucleus. Functionally, component of the COP9 signalosome complex (CSN), a complex involved in various cellular and developmental processes such as photomorphogenesis and auxin and jasmonate responses. The CSN complex is an essential regulator of the ubiquitin (Ubl) conjugation pathway by mediating the deneddylation of the cullin subunits of SCF-type E3 ligase complexes, leading to decrease the Ubl ligase activity of SCF. It is involved in repression of photomorphogenesis in darkness by regulating the activity of COP1-containing Ubl ligase complexes. This is COP9 signalosome complex subunit 6b (CSN6B) from Brassica oleracea (Wild cabbage).